Here is a 367-residue protein sequence, read N- to C-terminus: Quinolinate synthase (367 aa).

Histidine 45 and serine 62 together coordinate iminosuccinate. Cysteine 109 contributes to the [4Fe-4S] cluster binding site. Iminosuccinate is bound by residues 140–142 and serine 161; that span reads YVN. Cysteine 229 lines the [4Fe-4S] cluster pocket. Iminosuccinate is bound by residues 255–257 and threonine 272; that span reads HPE. Cysteine 319 serves as a coordination point for [4Fe-4S] cluster.

Belongs to the quinolinate synthase family. Type 3 subfamily. It depends on [4Fe-4S] cluster as a cofactor.

The protein resides in the cytoplasm. It carries out the reaction iminosuccinate + dihydroxyacetone phosphate = quinolinate + phosphate + 2 H2O + H(+). It functions in the pathway cofactor biosynthesis; NAD(+) biosynthesis; quinolinate from iminoaspartate: step 1/1. Functionally, catalyzes the condensation of iminoaspartate with dihydroxyacetone phosphate to form quinolinate. The protein is Quinolinate synthase of Geobacillus sp. (strain WCH70).